Consider the following 159-residue polypeptide: Phosphopantetheine adenylyltransferase (159 aa).

Substrate is bound at residue Ser10. ATP-binding positions include 10 to 11 (SF) and His18. Substrate is bound by residues Lys42, Leu77, and Lys91. ATP is bound by residues 92 to 94 (GIR), Glu102, and 126 to 132 (NAHVSSS).

The protein belongs to the bacterial CoaD family. In terms of assembly, homohexamer. Requires Mg(2+) as cofactor.

The protein resides in the cytoplasm. The catalysed reaction is (R)-4'-phosphopantetheine + ATP + H(+) = 3'-dephospho-CoA + diphosphate. It participates in cofactor biosynthesis; coenzyme A biosynthesis; CoA from (R)-pantothenate: step 4/5. In terms of biological role, reversibly transfers an adenylyl group from ATP to 4'-phosphopantetheine, yielding dephospho-CoA (dPCoA) and pyrophosphate. The polypeptide is Phosphopantetheine adenylyltransferase (Leifsonia xyli subsp. xyli (strain CTCB07)).